The primary structure comprises 75 residues: Cytochrome c oxidase subunit 6C (75 aa).

Topologically, residues 1-13 are mitochondrial matrix; the sequence is MASEVLVKPQMRG. A helical transmembrane segment spans residues 14-54; the sequence is LLARRLRIHMVGAFLVSLGVAALYKFGVAEPRKKAYADFYK. At 55 to 75 the chain is on the mitochondrial intermembrane side; sequence NYSAEKDFEEMKKAGLFRSIK.

This sequence belongs to the cytochrome c oxidase subunit 6c family. Component of the cytochrome c oxidase (complex IV, CIV), a multisubunit enzyme composed of 14 subunits. The complex is composed of a catalytic core of 3 subunits MT-CO1, MT-CO2 and MT-CO3, encoded in the mitochondrial DNA, and 11 supernumerary subunits COX4I, COX5A, COX5B, COX6A, COX6B, COX6C, COX7A, COX7B, COX7C, COX8 and NDUFA4, which are encoded in the nuclear genome. The complex exists as a monomer or a dimer and forms supercomplexes (SCs) in the inner mitochondrial membrane with NADH-ubiquinone oxidoreductase (complex I, CI) and ubiquinol-cytochrome c oxidoreductase (cytochrome b-c1 complex, complex III, CIII), resulting in different assemblies (supercomplex SCI(1)III(2)IV(1) and megacomplex MCI(2)III(2)IV(2)).

The protein localises to the mitochondrion inner membrane. Its pathway is energy metabolism; oxidative phosphorylation. Component of the cytochrome c oxidase, the last enzyme in the mitochondrial electron transport chain which drives oxidative phosphorylation. The respiratory chain contains 3 multisubunit complexes succinate dehydrogenase (complex II, CII), ubiquinol-cytochrome c oxidoreductase (cytochrome b-c1 complex, complex III, CIII) and cytochrome c oxidase (complex IV, CIV), that cooperate to transfer electrons derived from NADH and succinate to molecular oxygen, creating an electrochemical gradient over the inner membrane that drives transmembrane transport and the ATP synthase. Cytochrome c oxidase is the component of the respiratory chain that catalyzes the reduction of oxygen to water. Electrons originating from reduced cytochrome c in the intermembrane space (IMS) are transferred via the dinuclear copper A center (CU(A)) of subunit 2 and heme A of subunit 1 to the active site in subunit 1, a binuclear center (BNC) formed by heme A3 and copper B (CU(B)). The BNC reduces molecular oxygen to 2 water molecules using 4 electrons from cytochrome c in the IMS and 4 protons from the mitochondrial matrix. In Plecturocebus donacophilus (Bolivian gray titi monkey), this protein is Cytochrome c oxidase subunit 6C (COX6C).